The sequence spans 738 residues: MEQTYQYAWIIPFVPLPVPMLIGVGLLLFPTATKNLRRMWAFPSILLLSIVMIFSINLSIQQIDSSCIYQYVWSWTINNDFSLEFGYLIDPLTSIMSMLITTVGIMVLIYSDNYMAHDQGYLRFFASMSFFSTSMLGLVTSSNLIQIYIFWELVGMCSYLLIGFWFTRPLAANACQKAFVTNRVGDFGLLLGILGFYWITGSFEFRDLFEILNNFISKNEVNSSFGTLCAALLFTGAVAKSAQFPLHVWLPDAMEGPTPISALIHAATMVAAGIFLVARLLPLFIVIPYIMNFISFIGIITVLLGATLALAQKDIKRGLAYSTMSQLGYMMLALGMGSYRSALFHLITHAYSKALLFLGSGSIIHSMETIVGYSPDKSQNMVLMGGLRKHVPITQISFLLGTLSLCGIPPLACFWSKDEILNDSWLYSPIFAIIAWSTAGLTAFYMFRIYLLTFEGHLNVHFQNYSGKQNTPFYSISLWGKGDSKRINKNFRLLKMNNSKSSSFFSKKPYRSGKNVRNRVGPFLTIVHFENQKSYSYPYESDNTMLFPLLVLGILTLFVGSLGIPFNQELDILTKWLTPSINLLHQKWNDSIDWYEFWKDASFSVSIAYFGIFIASFLYKPIYSSFPNFFLINLFVKTGPKRSLWDKILNGLYNWSYNRAYIDAFYTTSLTGAVRGLAQVTHFFDRRVIDGITNGVGVMSFFVGEGIKYVGGGRISSYLFFYLSCVSIFLLGLYFPVF.

Helical transmembrane passes span 9 to 29 (WIIPFVPLPVPMLIGVGLLLF), 40 to 60 (WAFPSILLLSIVMIFSINLSI), 89 to 109 (IDPLTSIMSMLITTVGIMVLI), 125 to 145 (FASMSFFSTSMLGLVTSSNLI), 147 to 167 (IYIFWELVGMCSYLLIGFWFT), 185 to 205 (GDFGLLLGILGFYWITGSFEF), 230 to 250 (AALLFTGAVAKSAQFPLHVWL), 258 to 278 (TPISALIHAATMVAAGIFLVA), 280 to 300 (LLPLFIVIPYIMNFISFIGII), 327 to 347 (LGYMMLALGMGSYRSALFHLI), 354 to 374 (ALLFLGSGSIIHSMETIVGYS), 396 to 416 (ISFLLGTLSLCGIPPLACFWS), 425 to 445 (WLYSPIFAIIAWSTAGLTAFY), 546 to 566 (LFPLLVLGILTLFVGSLGIPF), 603 to 623 (FSVSIAYFGIFIASFLYKPIY), and 718 to 738 (YLFFYLSCVSIFLLGLYFPVF).

This sequence belongs to the complex I subunit 5 family. As to quaternary structure, NDH is composed of at least 16 different subunits, 5 of which are encoded in the nucleus.

It is found in the plastid. The protein resides in the chloroplast thylakoid membrane. It carries out the reaction a plastoquinone + NADH + (n+1) H(+)(in) = a plastoquinol + NAD(+) + n H(+)(out). It catalyses the reaction a plastoquinone + NADPH + (n+1) H(+)(in) = a plastoquinol + NADP(+) + n H(+)(out). Functionally, NDH shuttles electrons from NAD(P)H:plastoquinone, via FMN and iron-sulfur (Fe-S) centers, to quinones in the photosynthetic chain and possibly in a chloroplast respiratory chain. The immediate electron acceptor for the enzyme in this species is believed to be plastoquinone. Couples the redox reaction to proton translocation, and thus conserves the redox energy in a proton gradient. This Ligustrum vulgare (Common privet) protein is NAD(P)H-quinone oxidoreductase subunit 5, chloroplastic (ndhF).